The sequence spans 218 residues: MNIRNARPDDLMNMQHCNLLCLPENYQMKYYFYHGLSWPQLSYIAEDEDGKIVGYVLAKMEEDPDDVPHGHITSLAVKRSHRRLGLAQKLMDQASRAMIENFGAKYVSLHVRKSNRAALHLYSNTLNFQVSEVEPKYYADGEDAYAMKRDLSQMTDELRRQLVLKKNRYVVLGSEETQGGTLPDAGEACLPKNPTSKDSGSSDSTDVQDSSEDLDSIS.

The tract at residues 1–58 (MNIRNARPDDLMNMQHCNLLCLPENYQMKYYFYHGLSWPQLSYIAEDEDGKIVGYVLA) is interaction with NAA15. Positions 1 to 152 (MNIRNARPDD…DAYAMKRDLS (152 aa)) constitute an N-acetyltransferase domain. Positions 175 to 218 (EETQGGTLPDAGEACLPKNPTSKDSGSSDSTDVQDSSEDLDSIS) are disordered. Residues 196-205 (SKDSGSSDST) are compositionally biased toward low complexity. A compositionally biased stretch (acidic residues) spans 209 to 218 (DSSEDLDSIS).

The protein belongs to the acetyltransferase family. ARD1 subfamily. In terms of assembly, component of the N-terminal acetyltransferase A (NatA) complex composed of NAA11 and NAA15. Interacts with HIF1A.

The protein resides in the cytoplasm. It localises to the nucleus. The enzyme catalyses N-terminal glycyl-[protein] + acetyl-CoA = N-terminal N(alpha)-acetylglycyl-[protein] + CoA + H(+). The catalysed reaction is N-terminal L-alanyl-[protein] + acetyl-CoA = N-terminal N(alpha)-acetyl-L-alanyl-[protein] + CoA + H(+). It carries out the reaction N-terminal L-seryl-[protein] + acetyl-CoA = N-terminal N(alpha)-acetyl-L-seryl-[protein] + CoA + H(+). It catalyses the reaction N-terminal L-valyl-[protein] + acetyl-CoA = N-terminal N(alpha)-acetyl-L-valyl-[protein] + CoA + H(+). The enzyme catalyses N-terminal L-cysteinyl-[protein] + acetyl-CoA = N-terminal N(alpha)-acetyl-L-cysteinyl-[protein] + CoA + H(+). The catalysed reaction is N-terminal L-threonyl-[protein] + acetyl-CoA = N-terminal N(alpha)-acetyl-L-threonyl-[protein] + CoA + H(+). Functionally, displays alpha (N-terminal) acetyltransferase activity. Proposed alternative catalytic subunit of the N-terminal acetyltransferase A (NatA) complex. The chain is N-alpha-acetyltransferase 11 (Naa11) from Mus musculus (Mouse).